We begin with the raw amino-acid sequence, 348 residues long: Methylthioribose-1-phosphate isomerase (348 aa).

Residues 48–50, R90, and Q195 contribute to the substrate site; that span reads RGA. D236 acts as the Proton donor in catalysis. 246 to 247 is a binding site for substrate; the sequence is NK.

It belongs to the eIF-2B alpha/beta/delta subunits family. MtnA subfamily.

The catalysed reaction is 5-(methylsulfanyl)-alpha-D-ribose 1-phosphate = 5-(methylsulfanyl)-D-ribulose 1-phosphate. It participates in amino-acid biosynthesis; L-methionine biosynthesis via salvage pathway; L-methionine from S-methyl-5-thio-alpha-D-ribose 1-phosphate: step 1/6. Its function is as follows. Catalyzes the interconversion of methylthioribose-1-phosphate (MTR-1-P) into methylthioribulose-1-phosphate (MTRu-1-P). The protein is Methylthioribose-1-phosphate isomerase of Exiguobacterium sibiricum (strain DSM 17290 / CCUG 55495 / CIP 109462 / JCM 13490 / 255-15).